We begin with the raw amino-acid sequence, 1742 residues long: Meiosis regulator and mRNA stability factor 1 (1742 aa).

The residue at position 65 (Ser65) is a Phosphoserine. Residues 351 to 488 (IGVFWDIENC…ALLHHANELI (138 aa)) form the NYN domain. Disordered stretches follow at residues 620–642 (PSSA…TRNA) and 655–721 (SKTG…KEKE). The segment covering 631 to 642 (SQANSGSATRNA) has biased composition (polar residues). Residues 673-689 (APPHRSSSAAAPAPKAP) show a composition bias toward low complexity. Tyr696 is modified (phosphotyrosine). The residue at position 757 (Ser757) is a Phosphoserine. Positions 788-867 (VDVQISNLDY…KKILVSLATG (80 aa)) constitute an RRM domain. 2 consecutive HTH OST-type domains span residues 872 to 946 (SLSL…SPLG) and 1000 to 1077 (SLKT…HNKP). Residues Ser1089 and Ser1091 each carry the phosphoserine modification. 6 HTH OST-type domains span residues 1097 to 1171 (QLIQ…LTHR), 1173 to 1247 (QVKR…CIPR), 1257 to 1332 (RTKQ…TEVE), 1333 to 1408 (RFKA…INRK), 1409 to 1484 (SLRA…CVKL), and 1486 to 1560 (SLYL…LKND). Ser1571 bears the Phosphoserine mark. Residues 1678–1729 (IRNENLPPDPSSPGVSAAVPAPPSPSSETPESLLSKDPTESPAKKQPKNRVK) form a disordered region. The span at 1703–1712 (SSETPESLLS) shows a compositional bias: low complexity.

In terms of assembly, interacts with LIMK2.

The protein localises to the peroxisome. Functionally, essential regulator of oogenesis required for female meiotic progression to repress transposable elements and preventing their mobilization, which is essential for the germline integrity. Probably acts via some RNA metabolic process, equivalent to the piRNA system in males, which mediates the repression of transposable elements during meiosis by forming complexes composed of RNAs and governs the methylation and subsequent repression of transposons. Also required to protect from DNA double-strand breaks. This chain is Meiosis regulator and mRNA stability factor 1, found in Bos taurus (Bovine).